The primary structure comprises 126 residues: Holo-[acyl-carrier-protein] synthase (126 aa).

Positions 6 and 55 each coordinate Mg(2+).

The protein belongs to the P-Pant transferase superfamily. AcpS family. It depends on Mg(2+) as a cofactor.

Its subcellular location is the cytoplasm. The catalysed reaction is apo-[ACP] + CoA = holo-[ACP] + adenosine 3',5'-bisphosphate + H(+). Functionally, transfers the 4'-phosphopantetheine moiety from coenzyme A to a Ser of acyl-carrier-protein. This chain is Holo-[acyl-carrier-protein] synthase, found in Chlorobium limicola (strain DSM 245 / NBRC 103803 / 6330).